A 229-amino-acid polypeptide reads, in one-letter code: Small ribosomal subunit protein uS3 (229 aa).

Residues Ile18–Glu87 enclose the KH type-2 domain.

This sequence belongs to the universal ribosomal protein uS3 family. As to quaternary structure, part of the 30S ribosomal subunit.

Binds the lower part of the 30S subunit head. The sequence is that of Small ribosomal subunit protein uS3 from Saccharolobus solfataricus (strain ATCC 35092 / DSM 1617 / JCM 11322 / P2) (Sulfolobus solfataricus).